We begin with the raw amino-acid sequence, 384 residues long: 1-deoxy-D-xylulose 5-phosphate reductoisomerase (384 aa).

Residues T10, G11, S12, I13, G36, N38, and N122 each coordinate NADPH. K123 serves as a coordination point for 1-deoxy-D-xylulose 5-phosphate. E124 contributes to the NADPH binding site. D148 serves as a coordination point for Mn(2+). 4 residues coordinate 1-deoxy-D-xylulose 5-phosphate: S149, E150, S174, and H197. E150 contributes to the Mn(2+) binding site. G203 contributes to the NADPH binding site. Positions 210, 215, 216, and 219 each coordinate 1-deoxy-D-xylulose 5-phosphate. Position 219 (E219) interacts with Mn(2+).

The protein belongs to the DXR family. Requires Mg(2+) as cofactor. It depends on Mn(2+) as a cofactor.

It catalyses the reaction 2-C-methyl-D-erythritol 4-phosphate + NADP(+) = 1-deoxy-D-xylulose 5-phosphate + NADPH + H(+). Its pathway is isoprenoid biosynthesis; isopentenyl diphosphate biosynthesis via DXP pathway; isopentenyl diphosphate from 1-deoxy-D-xylulose 5-phosphate: step 1/6. Its function is as follows. Catalyzes the NADPH-dependent rearrangement and reduction of 1-deoxy-D-xylulose-5-phosphate (DXP) to 2-C-methyl-D-erythritol 4-phosphate (MEP). In Geobacter metallireducens (strain ATCC 53774 / DSM 7210 / GS-15), this protein is 1-deoxy-D-xylulose 5-phosphate reductoisomerase.